Consider the following 364-residue polypeptide: Fructose-bisphosphate aldolase B (364 aa).

Position 2 is an N-acetylalanine (Ala2). At Lys13 the chain carries N6-succinyllysine. The residue at position 36 (Ser36) is a Phosphoserine. Thr39 bears the Phosphothreonine mark. Arg43 is a binding site for beta-D-fructose 1,6-bisphosphate. Ser89 bears the Phosphoserine mark. Thr119 is subject to Phosphothreonine. Lys121 is modified (N6-succinyllysine). Phosphoserine is present on Ser132. Glu188 serves as the catalytic Proton acceptor. The Schiff-base intermediate with dihydroxyacetone-P role is filled by Lys230. Residues Ser272, Ser276, Ser299, and Ser301 each carry the phosphoserine modification. 272 to 274 contacts beta-D-fructose 1,6-bisphosphate; the sequence is SGG. Residue Arg304 coordinates beta-D-fructose 1,6-bisphosphate. Residue Ser309 is modified to Phosphoserine. N6-succinyllysine is present on Lys317.

It belongs to the class I fructose-bisphosphate aldolase family. As to quaternary structure, homotetramer. Interacts with BBS1, BBS2, BBS4 and BBS7. Forms a ternary complex with G6PD and TP53; this interaction is direct.

Its subcellular location is the cytoplasm. It is found in the cytosol. The protein resides in the cytoskeleton. The protein localises to the microtubule organizing center. It localises to the centrosome. Its subcellular location is the centriolar satellite. It catalyses the reaction beta-D-fructose 1,6-bisphosphate = D-glyceraldehyde 3-phosphate + dihydroxyacetone phosphate. The enzyme catalyses beta-D-fructose 1-phosphate = D-glyceraldehyde + dihydroxyacetone phosphate. It participates in carbohydrate degradation; glycolysis; D-glyceraldehyde 3-phosphate and glycerone phosphate from D-glucose: step 4/4. It functions in the pathway carbohydrate biosynthesis; gluconeogenesis. Its pathway is carbohydrate metabolism; fructose metabolism. Catalyzes the aldol cleavage of fructose 1,6-biphosphate to form two triosephosphates dihydroxyacetone phosphate and D-glyceraldehyde 3-phosphate in glycolysis as well as the reverse stereospecific aldol addition reaction in gluconeogenesis. In fructolysis, metabolizes fructose 1-phosphate derived from the phosphorylation of dietary fructose by fructokinase into dihydroxyacetone phosphate and D-glyceraldehyde. Acts as an adapter independently of its enzymatic activity, exerts a tumor suppressor role by stabilizing the ternary complex with G6PD and TP53 to inhibit G6PD activity and keep oxidative pentose phosphate metabolism in check. The protein is Fructose-bisphosphate aldolase B (ALDOB) of Oryctolagus cuniculus (Rabbit).